The chain runs to 72 residues: MSQSVKRTAADKPLAPCPICGKPARTETKPFCSPRCADIDLGRWLGERYVIPGPEEDEMSYPPHSNDGNRSR.

Residues C17, C20, C32, and C36 each coordinate Zn(2+). The segment at 52-72 is disordered; sequence PGPEEDEMSYPPHSNDGNRSR.

The protein belongs to the DNA gyrase inhibitor YacG family. In terms of assembly, interacts with GyrB. The cofactor is Zn(2+).

In terms of biological role, inhibits all the catalytic activities of DNA gyrase by preventing its interaction with DNA. Acts by binding directly to the C-terminal domain of GyrB, which probably disrupts DNA binding by the gyrase. The chain is DNA gyrase inhibitor YacG from Methylorubrum extorquens (strain CM4 / NCIMB 13688) (Methylobacterium extorquens).